Here is a 259-residue protein sequence, read N- to C-terminus: Acetylglutamate kinase (259 aa).

Residues 45 to 46, R67, and N159 contribute to the substrate site; that span reads GG.

This sequence belongs to the acetylglutamate kinase family. ArgB subfamily.

It is found in the cytoplasm. It catalyses the reaction N-acetyl-L-glutamate + ATP = N-acetyl-L-glutamyl 5-phosphate + ADP. The protein operates within amino-acid biosynthesis; L-arginine biosynthesis; N(2)-acetyl-L-ornithine from L-glutamate: step 2/4. In terms of biological role, catalyzes the ATP-dependent phosphorylation of N-acetyl-L-glutamate. This Aeromonas hydrophila subsp. hydrophila (strain ATCC 7966 / DSM 30187 / BCRC 13018 / CCUG 14551 / JCM 1027 / KCTC 2358 / NCIMB 9240 / NCTC 8049) protein is Acetylglutamate kinase.